The following is a 163-amino-acid chain: Dual specificity phosphatase 28 (163 aa).

One can recognise a Tyrosine-protein phosphatase domain in the interval P10–A151. Catalysis depends on C95, which acts as the Phosphocysteine intermediate.

The protein belongs to the protein-tyrosine phosphatase family. Non-receptor class dual specificity subfamily. Monomer.

The enzyme catalyses O-phospho-L-tyrosyl-[protein] + H2O = L-tyrosyl-[protein] + phosphate. It catalyses the reaction O-phospho-L-seryl-[protein] + H2O = L-seryl-[protein] + phosphate. It carries out the reaction O-phospho-L-threonyl-[protein] + H2O = L-threonyl-[protein] + phosphate. Its function is as follows. Has phosphatase activity with the synthetic substrate 6,8-difluoro-4-methylumbelliferyl phosphate (in vitro). Has almost no detectable activity with phosphotyrosine, even less activity with phosphothreonine and displays complete lack of activity with phosphoserine. The poor activity with phosphotyrosine may be due to steric hindrance by bulky amino acid sidechains that obstruct access to the active site. This chain is Dual specificity phosphatase 28 (Dusp28), found in Mus musculus (Mouse).